The sequence spans 132 residues: Small ribosomal subunit protein uS8c (132 aa).

Belongs to the universal ribosomal protein uS8 family. Part of the 30S ribosomal subunit.

It is found in the plastid. The protein localises to the cyanelle. One of the primary rRNA binding proteins, it binds directly to 16S rRNA central domain where it helps coordinate assembly of the platform of the 30S subunit. The chain is Small ribosomal subunit protein uS8c (rps8) from Cyanophora paradoxa.